A 514-amino-acid chain; its full sequence is Serine--tRNA ligase, cytoplasmic (514 aa).

M1 carries the post-translational modification N-acetylmethionine. An interaction with tRNA region spans residues 9 to 61 (RVDKGGDPALIRETQEKRFKDPGLVDQLVKADSEWRRCRFRADNLNKLKNLCS). S241 bears the Phosphoserine mark. The L-serine site is built by T271 and R302. ATP is bound by residues 302-304 (RQE) and 318-321 (VHQF). The residue at position 323 (K323) is an N6-acetyllysine. E325 lines the L-serine pocket. Position 391 to 394 (391 to 394 (ELVS)) interacts with ATP. N427 is a binding site for L-serine. Positions 473–514 (PAPIEQEPSKKQKKQHEGSKKKAAARDVTLENRLQNMEVTDA) are disordered. Over residues 479–502 (EPSKKQKKQHEGSKKKAAARDVTL) the composition is skewed to basic and acidic residues. Residues 482 to 494 (KKQKKQHEGSKKK) carry the Nuclear localization signal motif. Residues 504-514 (NRLQNMEVTDA) show a composition bias toward polar residues.

The protein belongs to the class-II aminoacyl-tRNA synthetase family. Type-1 seryl-tRNA synthetase subfamily. As to quaternary structure, homodimer. The tRNA molecule may bind across the dimer. Interacts with SIRT2. Interacts with METTL6; interaction is required for the tRNA N(3)-methylcytidine methyltransferase activity of METTL6. Brain.

It localises to the cytoplasm. Its subcellular location is the nucleus. The catalysed reaction is tRNA(Ser) + L-serine + ATP = L-seryl-tRNA(Ser) + AMP + diphosphate + H(+). It catalyses the reaction tRNA(Sec) + L-serine + ATP = L-seryl-tRNA(Sec) + AMP + diphosphate + H(+). It participates in aminoacyl-tRNA biosynthesis; selenocysteinyl-tRNA(Sec) biosynthesis; L-seryl-tRNA(Sec) from L-serine and tRNA(Sec): step 1/1. In terms of biological role, catalyzes the attachment of serine to tRNA(Ser) in a two-step reaction: serine is first activated by ATP to form Ser-AMP and then transferred to the acceptor end of tRNA(Ser). Is probably also able to aminoacylate tRNA(Sec) with serine, to form the misacylated tRNA L-seryl-tRNA(Sec), which will be further converted into selenocysteinyl-tRNA(Sec). In the nucleus, binds to the VEGFA core promoter and prevents MYC binding and transcriptional activation by MYC. Recruits SIRT2 to the VEGFA promoter, promoting deacetylation of histone H4 at 'Lys-16' (H4K16). Thereby, inhibits the production of VEGFA and sprouting angiogenesis mediated by VEGFA. This is Serine--tRNA ligase, cytoplasmic from Homo sapiens (Human).